Consider the following 735-residue polypeptide: Trafficking protein particle complex subunit 12 (735 aa).

2 disordered regions span residues 1–204 and 237–276; these read MEDA…QPSP and NPGA…PPAS. A compositionally biased stretch (pro residues) spans 13–22; sequence PEAPHPPQLA. Residues 34–50 show a composition bias toward acidic residues; that stretch reads ETIDLGGDEFGSEENET. S109 and S184 each carry phosphoserine. TPR repeat units lie at residues 545-578, 580-613, 620-653, and 654-687; these read GRVM…YPEQ, PQLL…TQKL, IMVL…DPRN, and AVAN…DPRH.

As to quaternary structure, component of the multisubunit TRAPP (transport protein particle) complex, which includes at least TRAPPC2, TRAPPC2L, TRAPPC3, TRAPPC3L, TRAPPC4, TRAPPC5, TRAPPC8, TRAPPC9, TRAPPC10, TRAPPC11 and TRAPPC12. Interacts with CENPE. Phosphorylated as the cells enter mitosis but is dephosphorylated at or before the onset of anaphase. The phosphorylated form recruits CENPE to kinetochores more efficiently than the non-phosphorylated form.

It localises to the endoplasmic reticulum-Golgi intermediate compartment. The protein localises to the nucleus. In terms of biological role, component of the TRAPP complex, which is involved in endoplasmic reticulum to Golgi apparatus trafficking at a very early stage. Also plays a role in chromosome congression, kinetochore assembly and stability and controls the recruitment of CENPE to the kinetochores. This Homo sapiens (Human) protein is Trafficking protein particle complex subunit 12.